We begin with the raw amino-acid sequence, 329 residues long: GTP 3',8-cyclase (329 aa).

One can recognise a Radical SAM core domain in the interval 8–234 (AFARKFYYLR…QLRQRSDGPA (227 aa)). Arg-17 contributes to the GTP binding site. [4Fe-4S] cluster is bound by residues Cys-24 and Cys-28. An S-adenosyl-L-methionine-binding site is contributed by Tyr-30. [4Fe-4S] cluster is bound at residue Cys-31. Residue Arg-68 coordinates GTP. Gly-72 contributes to the S-adenosyl-L-methionine binding site. Thr-99 contributes to the GTP binding site. S-adenosyl-L-methionine is bound at residue Ser-123. Lys-160 contributes to the GTP binding site. Met-194 is an S-adenosyl-L-methionine binding site. [4Fe-4S] cluster contacts are provided by Cys-257 and Cys-260. 262–264 (RLR) serves as a coordination point for GTP. Residue Cys-274 coordinates [4Fe-4S] cluster.

Belongs to the radical SAM superfamily. MoaA family. In terms of assembly, monomer and homodimer. [4Fe-4S] cluster is required as a cofactor.

It catalyses the reaction GTP + AH2 + S-adenosyl-L-methionine = (8S)-3',8-cyclo-7,8-dihydroguanosine 5'-triphosphate + 5'-deoxyadenosine + L-methionine + A + H(+). It participates in cofactor biosynthesis; molybdopterin biosynthesis. Catalyzes the cyclization of GTP to (8S)-3',8-cyclo-7,8-dihydroguanosine 5'-triphosphate. This chain is GTP 3',8-cyclase, found in Escherichia coli O45:K1 (strain S88 / ExPEC).